Consider the following 462-residue polypeptide: Ubiquitin carboxyl-terminal hydrolase calypso (462 aa).

One can recognise a UCH catalytic domain in the interval 29–260 (GWLELESDPG…IRFNLMAVVP (232 aa)). C115 functions as the Nucleophile in the catalytic mechanism. H197 acts as the Proton donor in catalysis. A ULD domain is found at 357-385 (NYDKFICTFLTMLAHQGVLGELVSQHLLP). Residues 387 to 462 (KKISGQSAAN…KGRNKCRKRK (76 aa)) form a positively charged C-terminal tail required for binding nucleosomes region. A disordered region spans residues 394–462 (AANRLNKQNS…KGRNKCRKRK (69 aa)). Residues 399 to 447 (NKQNSAAASTANSSAGATAGGAKSQQQQQQQQQPQQPQTPKNGKSPGKT) are compositionally biased toward low complexity. Positions 448–462 (PGRRRKGRNKCRKRK) are enriched in basic residues.

The protein belongs to the peptidase C12 family. BAP1 subfamily. As to quaternary structure, catalytic component of the polycomb repressive deubiquitinase (PR-DUB) complex, at least composed of caly/calypso, Asx and sba (MBD5/6 homolog). The PR-DUB complex associates with nucleosomes to mediate deubiquitination of histone H2AK118ub1 substrates; the association requires the positively charged C-terminal tail of caly, probably due to direct binding of DNA. Interacts (via ULD domain) with Asx (via DEUBAD domain); the interaction produces a stable heterodimer with a composite binding site for ubiquitin. Homodimerizes (via coiled-coil hinge-region between the UCH and ULD domains) to mediate assembly of 2 copies of the caly-Asx heterodimer into a bisymmetric tetramer; dimerization enhances PR-DUB association with nucleosomes.

It localises to the nucleus. It catalyses the reaction Thiol-dependent hydrolysis of ester, thioester, amide, peptide and isopeptide bonds formed by the C-terminal Gly of ubiquitin (a 76-residue protein attached to proteins as an intracellular targeting signal).. In terms of biological role, catalytic component of the polycomb repressive deubiquitinase (PR-DUB) complex, a complex that specifically mediates deubiquitination of histone H2A monoubiquitinated at 'Lys-119' (H2AK118ub1). Mediates bisymmetric organization of the PR-DUB complex and is involved in association with nucleosomes to mediate deubiquitination. Does not deubiquitinate monoubiquitinated histone H2B. Required to maintain the transcriptionally repressive state of homeotic genes throughout development. The PR-DUB complex has weak or no activity toward 'Lys-48'- and 'Lys-63'-linked polyubiquitin chains. Polycomb group (PcG) protein. The chain is Ubiquitin carboxyl-terminal hydrolase calypso from Drosophila virilis (Fruit fly).